A 294-amino-acid chain; its full sequence is uncharacterized protein (294 aa).

Residues 1–18 (MKKLLLIITVFFTCSAVA) form the signal peptide.

This is an uncharacterized protein from Rickettsia bellii (strain RML369-C).